The chain runs to 129 residues: Cytochrome c-type protein SHP (129 aa).

Positions 1–17 (MTRFLILSAVLAGPALA) are cleaved as a signal peptide. Residues Cys-60, Cys-63, and His-64 each contribute to the heme c site. Cysteines 106 and 114 form a disulfide.

Post-translationally, binds 1 heme c group covalently per subunit.

High-spin cytochrome. Transiently bind oxygen during autoxidation, which occurs with a half-life of 3 minutes with a 4-fold excess of O(2). Also binds carbon monoxide, azide and cyanide. The polypeptide is Cytochrome c-type protein SHP (shp) (Cereibacter sphaeroides (strain ATCC 17023 / DSM 158 / JCM 6121 / CCUG 31486 / LMG 2827 / NBRC 12203 / NCIMB 8253 / ATH 2.4.1.) (Rhodobacter sphaeroides)).